The following is a 274-amino-acid chain: Large ribosomal subunit protein uL2 (274 aa).

Positions 223 to 274 are disordered; it reads VAMNPVDHPHGGGEGRTSGGRHPVTPWGVPTKGYKTRSNKRTDKYIVRRRTK.

This sequence belongs to the universal ribosomal protein uL2 family. As to quaternary structure, part of the 50S ribosomal subunit. Forms a bridge to the 30S subunit in the 70S ribosome.

One of the primary rRNA binding proteins. Required for association of the 30S and 50S subunits to form the 70S ribosome, for tRNA binding and peptide bond formation. It has been suggested to have peptidyltransferase activity; this is somewhat controversial. Makes several contacts with the 16S rRNA in the 70S ribosome. The polypeptide is Large ribosomal subunit protein uL2 (Shewanella amazonensis (strain ATCC BAA-1098 / SB2B)).